Reading from the N-terminus, the 168-residue chain is Large ribosomal subunit protein uL10 (168 aa).

This sequence belongs to the universal ribosomal protein uL10 family. Part of the ribosomal stalk of the 50S ribosomal subunit. The N-terminus interacts with L11 and the large rRNA to form the base of the stalk. The C-terminus forms an elongated spine to which L12 dimers bind in a sequential fashion forming a multimeric L10(L12)X complex.

Its function is as follows. Forms part of the ribosomal stalk, playing a central role in the interaction of the ribosome with GTP-bound translation factors. The polypeptide is Large ribosomal subunit protein uL10 (Laribacter hongkongensis (strain HLHK9)).